A 459-amino-acid chain; its full sequence is Methylenetetrahydrofolate--tRNA-(uracil-5-)-methyltransferase TrmFO (459 aa).

Residue 11–16 participates in FAD binding; sequence GAGLAG.

This sequence belongs to the MnmG family. TrmFO subfamily. The cofactor is FAD.

Its subcellular location is the cytoplasm. It catalyses the reaction uridine(54) in tRNA + (6R)-5,10-methylene-5,6,7,8-tetrahydrofolate + NADH + H(+) = 5-methyluridine(54) in tRNA + (6S)-5,6,7,8-tetrahydrofolate + NAD(+). The catalysed reaction is uridine(54) in tRNA + (6R)-5,10-methylene-5,6,7,8-tetrahydrofolate + NADPH + H(+) = 5-methyluridine(54) in tRNA + (6S)-5,6,7,8-tetrahydrofolate + NADP(+). In terms of biological role, catalyzes the folate-dependent formation of 5-methyl-uridine at position 54 (M-5-U54) in all tRNAs. This chain is Methylenetetrahydrofolate--tRNA-(uracil-5-)-methyltransferase TrmFO, found in Synechococcus sp. (strain CC9311).